Here is a 163-residue protein sequence, read N- to C-terminus: Putative defense protein 3 (163 aa).

Residues 1-18 form the signal peptide; the sequence is MMFAYIVAVVSALALTSA. A Reelin domain is found at 19-163; it reads YPTGAPSSTC…SAPVTVLSHK (145 aa). Cysteines 28 and 103 form a disulfide.

The protein belongs to the insect defense protein family.

It localises to the secreted. Functionally, may have antimicrobial activity. This chain is Putative defense protein 3, found in Antheraea mylitta (Tasar silkworm).